Consider the following 406-residue polypeptide: ATP-dependent RNA helicase eIF4A (406 aa).

Positions 25-53 (DSFDAMDLKPELLRGVYAYGFERPSAIQQ) match the Q motif motif. In terms of domain architecture, Helicase ATP-binding spans 56–226 (ILPIIKGNDV…TKFMRDPVRI (171 aa)). 69-76 (AQSGTGKT) serves as a coordination point for ATP. The DEAD box motif lies at 174–177 (DEAD). The 162-residue stretch at 237–398 (GIKQFYIAVE…EMPMNVAGKF (162 aa)) folds into the Helicase C-terminal domain.

This sequence belongs to the DEAD box helicase family. eIF4A subfamily. In terms of assembly, component of the eIF4F complex, which composition varies with external and internal environmental conditions. It is composed of at least eIF4A, eIF4E and eIF4G.

The protein localises to the cytoplasm. It catalyses the reaction ATP + H2O = ADP + phosphate + H(+). In terms of biological role, ATP-dependent RNA helicase which is a subunit of the eIF4F complex involved in cap recognition and is required for mRNA binding to ribosome. In the current model of translation initiation, eIF4A unwinds RNA secondary structures in the 5'-UTR of mRNAs which is necessary to allow efficient binding of the small ribosomal subunit, and subsequent scanning for the initiator codon. The polypeptide is ATP-dependent RNA helicase eIF4A (tif1) (Aspergillus fumigatus (strain ATCC MYA-4609 / CBS 101355 / FGSC A1100 / Af293) (Neosartorya fumigata)).